A 391-amino-acid chain; its full sequence is 4-hydroxy-3-methylbut-2-en-1-yl diphosphate synthase (flavodoxin) (391 aa).

C286, C289, C321, and E328 together coordinate [4Fe-4S] cluster.

Belongs to the IspG family. [4Fe-4S] cluster serves as cofactor.

The enzyme catalyses (2E)-4-hydroxy-3-methylbut-2-enyl diphosphate + oxidized [flavodoxin] + H2O + 2 H(+) = 2-C-methyl-D-erythritol 2,4-cyclic diphosphate + reduced [flavodoxin]. The protein operates within isoprenoid biosynthesis; isopentenyl diphosphate biosynthesis via DXP pathway; isopentenyl diphosphate from 1-deoxy-D-xylulose 5-phosphate: step 5/6. Converts 2C-methyl-D-erythritol 2,4-cyclodiphosphate (ME-2,4cPP) into 1-hydroxy-2-methyl-2-(E)-butenyl 4-diphosphate. The protein is 4-hydroxy-3-methylbut-2-en-1-yl diphosphate synthase (flavodoxin) of Corynebacterium diphtheriae (strain ATCC 700971 / NCTC 13129 / Biotype gravis).